We begin with the raw amino-acid sequence, 254 residues long: Leucyl/phenylalanyl-tRNA--protein transferase (254 aa).

The span at 1–10 shows a compositional bias: pro residues; the sequence is MSSQPPPLPW. Positions 1–28 are disordered; the sequence is MSSQPPPLPWLDPNQDFPPTSQAWDENS.

The protein belongs to the L/F-transferase family.

It localises to the cytoplasm. It carries out the reaction N-terminal L-lysyl-[protein] + L-leucyl-tRNA(Leu) = N-terminal L-leucyl-L-lysyl-[protein] + tRNA(Leu) + H(+). It catalyses the reaction N-terminal L-arginyl-[protein] + L-leucyl-tRNA(Leu) = N-terminal L-leucyl-L-arginyl-[protein] + tRNA(Leu) + H(+). The enzyme catalyses L-phenylalanyl-tRNA(Phe) + an N-terminal L-alpha-aminoacyl-[protein] = an N-terminal L-phenylalanyl-L-alpha-aminoacyl-[protein] + tRNA(Phe). Functionally, functions in the N-end rule pathway of protein degradation where it conjugates Leu, Phe and, less efficiently, Met from aminoacyl-tRNAs to the N-termini of proteins containing an N-terminal arginine or lysine. The chain is Leucyl/phenylalanyl-tRNA--protein transferase from Albidiferax ferrireducens (strain ATCC BAA-621 / DSM 15236 / T118) (Rhodoferax ferrireducens).